Reading from the N-terminus, the 46-residue chain is Protein YpdJ (46 aa).

May be involved in H(2) production during fermentative growth. In Escherichia coli (strain K12), this protein is Protein YpdJ (ypdJ).